The primary structure comprises 239 residues: Probable transcriptional regulatory protein Tcr_1104 (239 aa).

It belongs to the TACO1 family.

It is found in the cytoplasm. In Hydrogenovibrio crunogenus (strain DSM 25203 / XCL-2) (Thiomicrospira crunogena), this protein is Probable transcriptional regulatory protein Tcr_1104.